The primary structure comprises 258 residues: Acyl-[acyl-carrier-protein]--UDP-N-acetylglucosamine O-acyltransferase (258 aa).

This sequence belongs to the transferase hexapeptide repeat family. LpxA subfamily. Homotrimer.

It localises to the cytoplasm. The enzyme catalyses a (3R)-hydroxyacyl-[ACP] + UDP-N-acetyl-alpha-D-glucosamine = a UDP-3-O-[(3R)-3-hydroxyacyl]-N-acetyl-alpha-D-glucosamine + holo-[ACP]. Its pathway is glycolipid biosynthesis; lipid IV(A) biosynthesis; lipid IV(A) from (3R)-3-hydroxytetradecanoyl-[acyl-carrier-protein] and UDP-N-acetyl-alpha-D-glucosamine: step 1/6. Functionally, involved in the biosynthesis of lipid A, a phosphorylated glycolipid that anchors the lipopolysaccharide to the outer membrane of the cell. The protein is Acyl-[acyl-carrier-protein]--UDP-N-acetylglucosamine O-acyltransferase of Myxococcus xanthus (strain DK1622).